The chain runs to 245 residues: tRNA pseudouridine synthase A (245 aa).

Aspartate 52 (nucleophile) is an active-site residue. Tyrosine 111 lines the substrate pocket.

Belongs to the tRNA pseudouridine synthase TruA family. In terms of assembly, homodimer.

The enzyme catalyses uridine(38/39/40) in tRNA = pseudouridine(38/39/40) in tRNA. Functionally, formation of pseudouridine at positions 38, 39 and 40 in the anticodon stem and loop of transfer RNAs. This is tRNA pseudouridine synthase A from Wolbachia pipientis wMel.